Here is a 227-residue protein sequence, read N- to C-terminus: Lectin (227 aa).

A signal peptide spans methionine 1 to alanine 28. Glutamine 29 carries the post-translational modification Pyrrolidone carboxylic acid. Chitin-binding type-1 domains follow at residues glutamine 29 to serine 70, serine 71 to alanine 113, aspartate 114 to proline 156, and glutamate 157 to lysine 199. Intrachain disulfides connect cysteine 31–cysteine 46, cysteine 40–cysteine 52, cysteine 45–cysteine 59, cysteine 63–cysteine 68, cysteine 74–cysteine 89, cysteine 83–cysteine 95, cysteine 88–cysteine 102, cysteine 106–cysteine 111, cysteine 117–cysteine 132, cysteine 126–cysteine 138, cysteine 131–cysteine 145, cysteine 149–cysteine 154, cysteine 160–cysteine 175, cysteine 169–cysteine 181, cysteine 174–cysteine 188, and cysteine 192–cysteine 197. Methionine 38–cysteine 40 provides a ligand contact to substrate. Serine 90–tyrosine 101 is a binding site for substrate. Serine 142–glutamate 143 is a substrate binding site. Residues aspartate 202–valine 227 constitute a propeptide that is removed on maturation. Asparagine 211 is a glycosylation site (N-linked (GlcNAc...) asparagine).

Confined to root caps, several cell layers at the periphery of the coleorhiza and radicle, and in all cell layers of the coleoptile.

In terms of biological role, N-acetyl-D-glucosamine binding lectin. This Oryza sativa subsp. japonica (Rice) protein is Lectin.